Consider the following 351-residue polypeptide: Protein Wnt-2b-A (351 aa).

The N-terminal stretch at M1–V16 is a signal peptide. 11 cysteine pairs are disulfide-bonded: C67–C78, C118–C126, C128–C148, C197–C211, C199–C206, C269–C300, C285–C295, C299–C339, C315–C330, C317–C327, and C322–C323. N77 is a glycosylation site (N-linked (GlcNAc...) asparagine). S203 is lipidated: O-palmitoleoyl serine; by PORCN.

The protein belongs to the Wnt family. Post-translationally, palmitoleoylation is required for efficient binding to frizzled receptors. Depalmitoleoylation leads to Wnt signaling pathway inhibition. In terms of tissue distribution, expressed maternally in both vegetal and animal blastomeres with enrichment in the animal hemisphere. Expressed zygotically near the prosencephalic-mesencephalic boundary of the developing brain in neurula and tailbud stages, and also in non-brain areas at tadpole stages.

It is found in the secreted. It localises to the extracellular space. The protein resides in the extracellular matrix. Functionally, ligand for members of the frizzled family of seven transmembrane receptors. Functions in the canonical Wnt/beta-catenin signaling pathway. The polypeptide is Protein Wnt-2b-A (wnt2b-a) (Xenopus laevis (African clawed frog)).